A 327-amino-acid chain; its full sequence is N-acetyl-gamma-glutamyl-phosphate reductase (327 aa).

Cys-136 is a catalytic residue.

It belongs to the NAGSA dehydrogenase family. Type 1 subfamily.

Its subcellular location is the cytoplasm. It carries out the reaction N-acetyl-L-glutamate 5-semialdehyde + phosphate + NADP(+) = N-acetyl-L-glutamyl 5-phosphate + NADPH + H(+). It participates in amino-acid biosynthesis; L-arginine biosynthesis; N(2)-acetyl-L-ornithine from L-glutamate: step 3/4. Catalyzes the NADPH-dependent reduction of N-acetyl-5-glutamyl phosphate to yield N-acetyl-L-glutamate 5-semialdehyde. This Xylella fastidiosa (strain M23) protein is N-acetyl-gamma-glutamyl-phosphate reductase.